We begin with the raw amino-acid sequence, 294 residues long: Cytidine deaminase (294 aa).

2 CMP/dCMP-type deaminase domains span residues 48 to 168 (DDDA…FGPT) and 187 to 294 (AETD…RVTF). 89–91 (NME) provides a ligand contact to substrate. H102 contributes to the Zn(2+) binding site. The Proton donor role is filled by E104. Residues C129 and C132 each coordinate Zn(2+).

Belongs to the cytidine and deoxycytidylate deaminase family. Homodimer. The cofactor is Zn(2+).

The catalysed reaction is cytidine + H2O + H(+) = uridine + NH4(+). The enzyme catalyses 2'-deoxycytidine + H2O + H(+) = 2'-deoxyuridine + NH4(+). In terms of biological role, this enzyme scavenges exogenous and endogenous cytidine and 2'-deoxycytidine for UMP synthesis. In Yersinia pseudotuberculosis serotype IB (strain PB1/+), this protein is Cytidine deaminase.